We begin with the raw amino-acid sequence, 174 residues long: MQDRRSSYDYEGLLACGRGELFGPGNAQLPLPPMLMFDRITEITEDGGEFGKGLIRAELDVKSDLWFFGCHFKGDPVMPGCLGLDALWQMVGFYLGWTGGEGRGRALGLGDLKFSGQVLPHVRKVVYNVDIKRVMRSKLVLGIADGWLSTDGDIIYRAKDLKVGLFKQDAAPGT.

His-71 is a catalytic residue.

Belongs to the thioester dehydratase family. FabA subfamily. Homodimer.

It is found in the cytoplasm. It catalyses the reaction a (3R)-hydroxyacyl-[ACP] = a (2E)-enoyl-[ACP] + H2O. The catalysed reaction is (3R)-hydroxydecanoyl-[ACP] = (2E)-decenoyl-[ACP] + H2O. It carries out the reaction (2E)-decenoyl-[ACP] = (3Z)-decenoyl-[ACP]. The protein operates within lipid metabolism; fatty acid biosynthesis. Its function is as follows. Necessary for the introduction of cis unsaturation into fatty acids. Catalyzes the dehydration of (3R)-3-hydroxydecanoyl-ACP to E-(2)-decenoyl-ACP and then its isomerization to Z-(3)-decenoyl-ACP. Can catalyze the dehydratase reaction for beta-hydroxyacyl-ACPs with saturated chain lengths up to 16:0, being most active on intermediate chain length. This chain is 3-hydroxydecanoyl-[acyl-carrier-protein] dehydratase, found in Nitrobacter hamburgensis (strain DSM 10229 / NCIMB 13809 / X14).